The chain runs to 644 residues: 3D-(3,5/4)-trihydroxycyclohexane-1,2-dione hydrolase (644 aa).

Glu-65 contributes to the thiamine diphosphate binding site. A thiamine pyrophosphate binding region spans residues 442-522 (SLPGDLQRMW…INVLLFDNSG (81 aa)). The Mg(2+) site is built by Asp-493 and Asn-520.

Belongs to the TPP enzyme family. Mg(2+) is required as a cofactor. Requires thiamine diphosphate as cofactor.

It carries out the reaction 3D-3,5/4-trihydroxycyclohexane-1,2-dione + H2O = 5-deoxy-D-glucuronate + H(+). The protein operates within polyol metabolism; myo-inositol degradation into acetyl-CoA; acetyl-CoA from myo-inositol: step 3/7. Its function is as follows. Involved in the cleavage of the C1-C2 bond of 3D-(3,5/4)-trihydroxycyclohexane-1,2-dione (THcHDO) to yield 5-deoxy-glucuronate (5DG). The sequence is that of 3D-(3,5/4)-trihydroxycyclohexane-1,2-dione hydrolase from Bacillus cereus (strain AH820).